A 168-amino-acid polypeptide reads, in one-letter code: Photosystem I assembly protein Ycf3 (168 aa).

3 TPR repeats span residues 35-68 (AFTY…EIDP), 72-105 (SYIL…NPFL), and 120-153 (GEQA…TPGN).

Belongs to the Ycf3 family.

It is found in the plastid. It localises to the chloroplast thylakoid membrane. Essential for the assembly of the photosystem I (PSI) complex. May act as a chaperone-like factor to guide the assembly of the PSI subunits. This is Photosystem I assembly protein Ycf3 from Calycanthus floridus var. glaucus (Eastern sweetshrub).